The chain runs to 65 residues: Ferredoxin soy (65 aa).

The 4Fe-4S ferredoxin-type domain maps to G2–D29. Positions 10, 16, and 55 each coordinate [3Fe-4S] cluster.

[3Fe-4S] cluster is required as a cofactor.

Functionally, electron transport protein for the cytochrome P-450-SOY system. The sequence is that of Ferredoxin soy (soyB) from Streptomyces griseus.